The sequence spans 98 residues: Integration host factor subunit alpha (98 aa).

Positions 49 to 71 are disordered; sequence FGNFDLRDKNQRPGRNPKTGEDI.

This sequence belongs to the bacterial histone-like protein family. In terms of assembly, heterodimer of an alpha and a beta chain.

Functionally, this protein is one of the two subunits of integration host factor, a specific DNA-binding protein that functions in genetic recombination as well as in transcriptional and translational control. The polypeptide is Integration host factor subunit alpha (Edwardsiella ictaluri (strain 93-146)).